The sequence spans 213 residues: Large ribosomal subunit protein uL1 (213 aa).

Belongs to the universal ribosomal protein uL1 family. Part of the 50S ribosomal subunit.

Binds directly to 23S rRNA. Probably involved in E site tRNA release. Its function is as follows. Protein L1 is also a translational repressor protein, it controls the translation of its operon by binding to its mRNA. The chain is Large ribosomal subunit protein uL1 from Methanosarcina barkeri (strain Fusaro / DSM 804).